Reading from the N-terminus, the 254-residue chain is MTEEVWMGTWRPHRPRGPIMALYSSPGPKYLIPPTTGFMKHTPTKLRAPAYSFRGAPMLLAENCSPGPRYNVNPKILRTGKDLGPAYSILGRYQTKTMLTPGPGDYFPEKSTKYVFDSAPSHSISARTKAFRVDSTPGPAAYMLPMVMGPNTVGKASQPSFSIKGRSKLGGFSDDLHKTPGPAAYRQTDVRVTKFKAPQYTMAARVEPPGDKTLKPGPGAHSPEKVTLTKPCAPVVTFGIKHSDYMTPLLVDVE.

2 STPGR repeats span residues 180–205 (PGPA…MAAR) and 216–241 (PGPG…FGIK). The tract at residues 207–226 (EPPGDKTLKPGPGAHSPEKV) is disordered.

The protein belongs to the CIMAP family. As to quaternary structure, microtubule inner protein component of sperm flagellar doublet microtubules. As to expression, testis-specific.

It is found in the cytoplasm. The protein localises to the cytoskeleton. Its subcellular location is the flagellum axoneme. In terms of biological role, outer dense fibers are filamentous structures located on the outside of the axoneme in the midpiece and principal piece of the mammalian sperm tail. May help to maintain the passive elastic structures and elastic recoil of the sperm tail. In Homo sapiens (Human), this protein is Ciliary microtubule associated protein 1A.